The sequence spans 294 residues: Small ribosomal subunit protein uS2 (294 aa).

The protein belongs to the universal ribosomal protein uS2 family.

The chain is Small ribosomal subunit protein uS2 (rpsB) from Mycoplasma pneumoniae (strain ATCC 29342 / M129 / Subtype 1) (Mycoplasmoides pneumoniae).